The sequence spans 180 residues: Large ribosomal subunit protein uL15 (180 aa).

Positions 1-62 are disordered; sequence MKKERLEQAA…KTAGRGSKGQ (62 aa). Over residues 35–44 the composition is skewed to basic residues; it reads GAKKEKKRVG.

It belongs to the universal ribosomal protein uL15 family. Part of the 50S ribosomal subunit.

In terms of biological role, binds to the 23S rRNA. This is Large ribosomal subunit protein uL15 from Leptospira borgpetersenii serovar Hardjo-bovis (strain JB197).